A 72-amino-acid polypeptide reads, in one-letter code: Translation initiation factor IF-1 2 (72 aa).

Positions 1 to 72 (MAKEELIEFE…TKGRINYRHK (72 aa)) constitute an S1-like domain.

This sequence belongs to the IF-1 family. As to quaternary structure, component of the 30S ribosomal translation pre-initiation complex which assembles on the 30S ribosome in the order IF-2 and IF-3, IF-1 and N-formylmethionyl-tRNA(fMet); mRNA recruitment can occur at any time during PIC assembly.

It localises to the cytoplasm. In terms of biological role, one of the essential components for the initiation of protein synthesis. Stabilizes the binding of IF-2 and IF-3 on the 30S subunit to which N-formylmethionyl-tRNA(fMet) subsequently binds. Helps modulate mRNA selection, yielding the 30S pre-initiation complex (PIC). Upon addition of the 50S ribosomal subunit IF-1, IF-2 and IF-3 are released leaving the mature 70S translation initiation complex. In Ralstonia nicotianae (strain ATCC BAA-1114 / GMI1000) (Ralstonia solanacearum), this protein is Translation initiation factor IF-1 2.